Reading from the N-terminus, the 512-residue chain is ATP synthase subunit alpha (512 aa).

170–177 provides a ligand contact to ATP; it reads GDRQTGKT.

Belongs to the ATPase alpha/beta chains family. As to quaternary structure, F-type ATPases have 2 components, CF(1) - the catalytic core - and CF(0) - the membrane proton channel. CF(1) has five subunits: alpha(3), beta(3), gamma(1), delta(1), epsilon(1). CF(0) has three main subunits: a(1), b(2) and c(9-12). The alpha and beta chains form an alternating ring which encloses part of the gamma chain. CF(1) is attached to CF(0) by a central stalk formed by the gamma and epsilon chains, while a peripheral stalk is formed by the delta and b chains.

The protein localises to the cell inner membrane. It catalyses the reaction ATP + H2O + 4 H(+)(in) = ADP + phosphate + 5 H(+)(out). Its function is as follows. Produces ATP from ADP in the presence of a proton gradient across the membrane. The alpha chain is a regulatory subunit. The protein is ATP synthase subunit alpha of Solibacter usitatus (strain Ellin6076).